We begin with the raw amino-acid sequence, 475 residues long: Ribulose bisphosphate carboxylase large chain (475 aa).

Residues 1–2 constitute a propeptide that is removed on maturation; it reads MS. Pro3 is subject to N-acetylproline. Lys14 bears the N6,N6,N6-trimethyllysine mark. Substrate-binding residues include Asn123 and Thr173. The active-site Proton acceptor is the Lys175. Lys177 serves as a coordination point for substrate. Mg(2+) contacts are provided by Lys201, Asp203, and Glu204. Residue Lys201 is modified to N6-carboxylysine. The active-site Proton acceptor is the His294. Substrate is bound by residues Arg295, His327, and Ser379.

Belongs to the RuBisCO large chain family. Type I subfamily. Heterohexadecamer of 8 large chains and 8 small chains; disulfide-linked. The disulfide link is formed within the large subunit homodimers. Mg(2+) is required as a cofactor. The disulfide bond which can form in the large chain dimeric partners within the hexadecamer appears to be associated with oxidative stress and protein turnover.

The protein localises to the plastid. Its subcellular location is the chloroplast. It catalyses the reaction 2 (2R)-3-phosphoglycerate + 2 H(+) = D-ribulose 1,5-bisphosphate + CO2 + H2O. It carries out the reaction D-ribulose 1,5-bisphosphate + O2 = 2-phosphoglycolate + (2R)-3-phosphoglycerate + 2 H(+). RuBisCO catalyzes two reactions: the carboxylation of D-ribulose 1,5-bisphosphate, the primary event in carbon dioxide fixation, as well as the oxidative fragmentation of the pentose substrate in the photorespiration process. Both reactions occur simultaneously and in competition at the same active site. In Carica papaya (Papaya), this protein is Ribulose bisphosphate carboxylase large chain.